The chain runs to 248 residues: Ribosomal RNA small subunit methyltransferase G (248 aa).

S-adenosyl-L-methionine-binding positions include Gly-85, Phe-90, 108–110 (DSS), 137–138 (AE), and Arg-156.

Belongs to the methyltransferase superfamily. RNA methyltransferase RsmG family.

The protein resides in the cytoplasm. In terms of biological role, specifically methylates the N7 position of a guanine in 16S rRNA. The polypeptide is Ribosomal RNA small subunit methyltransferase G (Prochlorococcus marinus (strain NATL2A)).